A 104-amino-acid polypeptide reads, in one-letter code: UPF0125 protein PSPTO_4512 (104 aa).

The protein belongs to the UPF0125 (RnfH) family.

The protein is UPF0125 protein PSPTO_4512 of Pseudomonas syringae pv. tomato (strain ATCC BAA-871 / DC3000).